Here is a 195-residue protein sequence, read N- to C-terminus: Putative L(+)-tartrate dehydratase subunit beta (195 aa).

The active site involves H36. K104 provides a ligand contact to substrate.

It belongs to the class-I fumarase family. As to quaternary structure, heterotetramer of two alpha and two beta subunits.

The enzyme catalyses (2R,3R)-tartrate = oxaloacetate + H2O. The polypeptide is Putative L(+)-tartrate dehydratase subunit beta (Methanocaldococcus jannaschii (strain ATCC 43067 / DSM 2661 / JAL-1 / JCM 10045 / NBRC 100440) (Methanococcus jannaschii)).